The sequence spans 373 residues: Schlafen-like protein 1 (373 aa).

A disordered region spans residues 1 to 67; sequence MAALFEENDS…ELSSEEVDIP (67 aa). The tract at residues 247 to 373 is SLFN-like fold; sequence KAGAKIEFRT…NQVYRLESSV (127 aa).

It belongs to the Schlafen family. In terms of assembly, component of the trimeric PUCH (precursor of 21U RNA 5'-end cleavage holoenzyme) complex; consisting of tofu-1, tofu-2 and either slfl-3 or slfl-4; which is required for processing of piRNA precursors. Within the complex, interacts (via N-terminus) with tofu-2 (via N-terminus); the interaction stabilizes tofu-2 and may form a functional nuclease. Within the complex, required for the interaction of tofu-2 (via N-terminus) with slfl-3 (via N-terminus). Interacts (via residues 82-172) with the PETISCO complex subunit tofu-6 (via residues 120-314); the interaction between the PETISCO and PUCH complex members enhances piRNA production in vivo. Expressed in the germline.

It is found in the cytoplasm. Functionally, component of the trimeric PUCH (precursor of 21U RNA 5'-end cleavage holoenzyme) complex, that acts as an endoribonuclease processing the 5'-end of precursor Piwi-interacting RNAs (piRNAs). The PUCH complex consists of tofu-1, tofu-2 and either slfl-3 or slfl-4, with tofu-2 exhibiting endoribonuclease activity. PUCH-mediated processing strictly requires a 7-methyl-G cap (m7 G-cap) and an uracil at position three (U3). PUCH also exhibits a strict bias for piRNA precursors with an A or G at position 1. Mature piRNA production is enhanced by the interaction of PUCH with the PETISCO complex, which is stabilizing piRNA precursors and allows their processing by PUCH. The protein is Schlafen-like protein 1 of Caenorhabditis elegans.